The sequence spans 270 residues: Neurotrophic factor BDNF precursor form (270 aa).

Residues 1 to 18 form the signal peptide; it reads MTILFVTMVISYFSCMRA. The propeptide occupies 19–151; that stretch reads APMREIPGVQ…AANMSMRVRR (133 aa). N144 is a glycosylation site (N-linked (GlcNAc...) asparagine). Intrachain disulfides connect C164-C231, C209-C260, and C219-C262.

It belongs to the NGF-beta family.

It localises to the secreted. Promotes the survival of neuronal populations that are all located either in the central nervous system or directly connected to it. The protein is Neurotrophic factor BDNF precursor form (bdnf) of Cyprinus carpio (Common carp).